Reading from the N-terminus, the 209-residue chain is MSGIKRTASSNRWMLEHFDDHYVKLAQKMGLRSRAAFKLEEIQQKDQLIRPGMTVVDLGAAPGGWSQVAVKLAGDRGKVIACDILPMDPIVGVDFLQGDFREDKVLQALLTRVGDAKVDVVLSDMAPNMSGSDSVDQPRAMYLVELALDMCHQVLAPNGCFAVKVFQGEGFDEYMKAVKAVFKVVKTRKPDSSRARSREVYLVATGYKL.

The S-adenosyl-L-methionine site is built by Gly-63, Trp-65, Asp-83, Asp-99, and Asp-124. Residue Lys-164 is the Proton acceptor of the active site.

This sequence belongs to the class I-like SAM-binding methyltransferase superfamily. RNA methyltransferase RlmE family.

It localises to the cytoplasm. It carries out the reaction uridine(2552) in 23S rRNA + S-adenosyl-L-methionine = 2'-O-methyluridine(2552) in 23S rRNA + S-adenosyl-L-homocysteine + H(+). Specifically methylates the uridine in position 2552 of 23S rRNA at the 2'-O position of the ribose in the fully assembled 50S ribosomal subunit. The chain is Ribosomal RNA large subunit methyltransferase E from Shewanella baltica (strain OS223).